Reading from the N-terminus, the 110-residue chain is Dermcidin (110 aa).

Residues 1-19 (MRFMTLLFLTALAGALVCA) form the signal peptide. A disordered region spans residues 24–70 (AASAPGSGNPCHEASAAQKENAGEDPGLARQAPKPRKQRSSLLEKGL). O-linked (Xyl...) (chondroitin sulfate) serine glycosylation is found at serine 30 and serine 38. The propeptide occupies 50-62 (GLARQAPKPRKQR). A helical membrane pass occupies residues 64–108 (SLLEKGLDGAKKAVGGLGKLGKDAVEDLESVGKGAVHDVKDVLDS). Glutamate 67 contacts Zn(2+). Lysine 68 is subject to N6-acetyllysine. Aspartate 71, aspartate 86, aspartate 90, histidine 100, and aspartate 104 together coordinate Zn(2+). Leucine 110 is a propeptide.

As to quaternary structure, homohexamer. Mn(2+) is required as a cofactor. Requires Zn(2+) as cofactor. Detected in urine (at protein level). Constitutively expressed in eccrine sweat gland cells (at protein level). Secreted into the sweat at a concentration of 1-10 micrograms/ml.

It localises to the secreted. The protein resides in the membrane. In terms of biological role, found in sweat, has an antimicrobial activity during early bacterial colonization. The secreted peptide assembles into homohexameric complexes that can associate with and also insert into pathogen membranes. Once inserted in bacteria membranes forms anion channels probably altering the transmembrane potential essential for bacterial survival. Highly effective against E.coli, E.faecalis, S.aureus and C.albicans. Optimal pH and salt concentration resemble the conditions in sweat. Also exhibits proteolytic activity, cleaving on the C-terminal side of Arg and, to a lesser extent, Lys residues. Its function is as follows. Promotes survival of neurons and displays phosphatase activity. It may bind IgG. This Homo sapiens (Human) protein is Dermcidin.